Here is a 244-residue protein sequence, read N- to C-terminus: MIRTDAKDGALVLFSGGQDSATCVAWALERYQTVETLGFDYGQRHRVELECREGVREALKRQFPAWADRLGDDHMIDLSVLGAISDTAMTRAIEIETAANGLPNTFVPGRNLLFMTIAAAIAYRRGLRVLVGGMCETDFSGYPDCRDDTMKALQVALNLGMDTRIVLETPLMWLDKAQTWQLAEQLGGQALVELIRVETHTCYVGERAELHDWGFGCGECPACKLRKRGYEAYLKGERVTEAPL.

14–24 (FSGGQDSATCV) serves as a coordination point for ATP. Zn(2+) contacts are provided by Cys202, Cys217, Cys220, and Cys223.

Belongs to the QueC family. The cofactor is Zn(2+).

The catalysed reaction is 7-carboxy-7-deazaguanine + NH4(+) + ATP = 7-cyano-7-deazaguanine + ADP + phosphate + H2O + H(+). The protein operates within purine metabolism; 7-cyano-7-deazaguanine biosynthesis. Its function is as follows. Catalyzes the ATP-dependent conversion of 7-carboxy-7-deazaguanine (CDG) to 7-cyano-7-deazaguanine (preQ(0)). The protein is 7-cyano-7-deazaguanine synthase of Burkholderia multivorans (strain ATCC 17616 / 249).